Consider the following 217-residue polypeptide: Ras-related protein Rab-19 (217 aa).

The GTP site is built by Ser26, Val28, Gly29, Lys30, Thr31, Cys32, Tyr42, Ser43, Glu44, Ser45, and Thr49. Thr31 is a binding site for Mg(2+). The Switch 1 signature appears at 39-54; that stretch reads SGVYSESQQNTIGVDF. Residues Thr49 and Asp72 each coordinate Mg(2+). The Switch 2 motif lies at 74 to 89; the sequence is AGQERFRTITQSYYRS. Residues Gly75, Asn130, Lys131, Asp133, Ser161, Ala162, and Lys163 each contribute to the GTP site. S-geranylgeranyl cysteine attachment occurs at residues Cys215 and Cys217. Residue Cys217 is modified to Cysteine methyl ester.

The protein belongs to the small GTPase superfamily. Rab family. Mg(2+) serves as cofactor. As to expression, expressed in a tissue-specific manner. Detected at high levels in intestine, lung and spleen, and at a lower level in kidney.

Its subcellular location is the cell membrane. The enzyme catalyses GTP + H2O = GDP + phosphate + H(+). Regulated by guanine nucleotide exchange factors (GEFs) which promote the exchange of bound GDP for free GTP. Regulated by GTPase activating proteins (GAPs) which increase the GTP hydrolysis activity. Inhibited by GDP dissociation inhibitors (GDIs). In terms of biological role, the small GTPases Rab are key regulators of intracellular membrane trafficking, from the formation of transport vesicles to their fusion with membranes. Rabs cycle between an inactive GDP-bound form and an active GTP-bound form that is able to recruit to membranes different set of downstream effectors directly responsible for vesicle formation, movement, tethering and fusion. This chain is Ras-related protein Rab-19, found in Mus musculus (Mouse).